The following is a 4334-amino-acid chain: Cytoplasmic dynein 2 heavy chain 1 (4334 aa).

The segment at 1-1704 (MSSDSRKTFV…KVAMAEATFD (1704 aa)) is stem. ATP is bound at residue 150–157 (LGTAVRKG). A coiled-coil region spans residues 1026-1097 (QEAKGLTAKL…AHLEEQKGNL (72 aa)). 4 AAA regions span residues 1705-1929 (YTWE…VLGI), 1996-2211 (KALA…KAFQ), 2299-2544 (GMDE…WING), and 2641-2882 (GYER…SSGS). ATP-binding positions include 1743-1750 (GPAGTGKT), 2034-2041 (GPSGSGKS), 2334-2341 (GPEGCGKG), and 2679-2686 (GNSGVGRR). Residues 2897 to 3185 (QIYNRKRTQV…ISVDKAESVL (289 aa)) form a stalk region. Coiled coils occupy residues 2930–2998 (LSAE…SEVQ) and 3120–3199 (ERVS…RGEK). 2 AAA regions span residues 3260–3492 (LSSE…TVEK) and 3701–3917 (MSSF…VITL).

The protein belongs to the dynein heavy chain family. The cytoplasmic dynein complex 2 is probably composed by a DHC1B homodimer and a number of D1BLIC light intermediate chains. Interacts with FAP133, FLA10 and LC8.

Its subcellular location is the cytoplasm. It is found in the cytoskeleton. The protein resides in the flagellum basal body. The protein localises to the cell projection. It localises to the cilium. Its subcellular location is the flagellum membrane. In terms of biological role, may function as a motor for intraflagellar retrograde transport. Functions in flagellar biogenesis. This chain is Cytoplasmic dynein 2 heavy chain 1 (DHC1B), found in Chlamydomonas reinhardtii (Chlamydomonas smithii).